A 630-amino-acid chain; its full sequence is Membrane protein insertase YidC (630 aa).

The next 5 helical transmembrane spans lie at 10–30 (LMFLVCAFAILIGYQFLVMGP), 396–416 (MVGNFGVAIMLLTVALKLILF), 470–490 (VPMLIQIPIFYSLYKVLTVTI), 528–548 (LIGAFLSGPLHIGVWPLLYGF), and 571–591 (FFPIVFTFTLSQFAVGLVIYW).

This sequence belongs to the OXA1/ALB3/YidC family. Type 1 subfamily. Interacts with the Sec translocase complex via SecD. Specifically interacts with transmembrane segments of nascent integral membrane proteins during membrane integration.

The protein resides in the cell inner membrane. In terms of biological role, required for the insertion and/or proper folding and/or complex formation of integral membrane proteins into the membrane. Involved in integration of membrane proteins that insert both dependently and independently of the Sec translocase complex, as well as at least some lipoproteins. Aids folding of multispanning membrane proteins. The protein is Membrane protein insertase YidC of Caulobacter sp. (strain K31).